Here is a 219-residue protein sequence, read N- to C-terminus: Thiamine-phosphate synthase (219 aa).

4-amino-2-methyl-5-(diphosphooxymethyl)pyrimidine contacts are provided by residues 45–49 (QYREK) and Asn-77. 2 residues coordinate Mg(2+): Asp-78 and Asp-97. Thr-116 serves as a coordination point for 4-amino-2-methyl-5-(diphosphooxymethyl)pyrimidine. Residue 142–144 (SFT) participates in 2-[(2R,5Z)-2-carboxy-4-methylthiazol-5(2H)-ylidene]ethyl phosphate binding. Lys-145 contributes to the 4-amino-2-methyl-5-(diphosphooxymethyl)pyrimidine binding site. Residues Gly-173 and 193–194 (VT) contribute to the 2-[(2R,5Z)-2-carboxy-4-methylthiazol-5(2H)-ylidene]ethyl phosphate site.

This sequence belongs to the thiamine-phosphate synthase family. The cofactor is Mg(2+).

The enzyme catalyses 2-[(2R,5Z)-2-carboxy-4-methylthiazol-5(2H)-ylidene]ethyl phosphate + 4-amino-2-methyl-5-(diphosphooxymethyl)pyrimidine + 2 H(+) = thiamine phosphate + CO2 + diphosphate. It catalyses the reaction 2-(2-carboxy-4-methylthiazol-5-yl)ethyl phosphate + 4-amino-2-methyl-5-(diphosphooxymethyl)pyrimidine + 2 H(+) = thiamine phosphate + CO2 + diphosphate. The catalysed reaction is 4-methyl-5-(2-phosphooxyethyl)-thiazole + 4-amino-2-methyl-5-(diphosphooxymethyl)pyrimidine + H(+) = thiamine phosphate + diphosphate. It participates in cofactor biosynthesis; thiamine diphosphate biosynthesis; thiamine phosphate from 4-amino-2-methyl-5-diphosphomethylpyrimidine and 4-methyl-5-(2-phosphoethyl)-thiazole: step 1/1. In terms of biological role, condenses 4-methyl-5-(beta-hydroxyethyl)thiazole monophosphate (THZ-P) and 2-methyl-4-amino-5-hydroxymethyl pyrimidine pyrophosphate (HMP-PP) to form thiamine monophosphate (TMP). This is Thiamine-phosphate synthase from Caldicellulosiruptor bescii (strain ATCC BAA-1888 / DSM 6725 / KCTC 15123 / Z-1320) (Anaerocellum thermophilum).